The following is a 206-amino-acid chain: RNA-free ribonuclease P (206 aa).

The interval 187 to 206 is disordered; sequence NLAGDDPGHAPPCGPDQPAG. The span at 195-206 shows a compositional bias: pro residues; the sequence is HAPPCGPDQPAG.

The protein belongs to the HARP family.

The catalysed reaction is Endonucleolytic cleavage of RNA, removing 5'-extranucleotides from tRNA precursor.. In terms of biological role, RNA-free RNase P that catalyzes the removal of the 5'-leader sequence from pre-tRNA to produce the mature 5'-terminus. The sequence is that of RNA-free ribonuclease P from Halorhodospira halophila (strain DSM 244 / SL1) (Ectothiorhodospira halophila (strain DSM 244 / SL1)).